Here is a 567-residue protein sequence, read N- to C-terminus: Malate synthase (567 aa).

The active-site Proton acceptor is the Arg177. The active-site Proton donor is Asp466. A Microbody targeting signal motif is present at residues 565-567 (CKL).

The protein belongs to the malate synthase family.

It is found in the glyoxysome. The catalysed reaction is glyoxylate + acetyl-CoA + H2O = (S)-malate + CoA + H(+). The protein operates within carbohydrate metabolism; glyoxylate cycle; (S)-malate from isocitrate: step 2/2. The sequence is that of Malate synthase from Oryza sativa subsp. japonica (Rice).